We begin with the raw amino-acid sequence, 112 residues long: Iron-sulfur cluster assembly protein CyaY (112 aa).

It belongs to the frataxin family.

Its function is as follows. Involved in iron-sulfur (Fe-S) cluster assembly. May act as a regulator of Fe-S biogenesis. This chain is Iron-sulfur cluster assembly protein CyaY, found in Delftia acidovorans (strain DSM 14801 / SPH-1).